Reading from the N-terminus, the 179-residue chain is Large ribosomal subunit protein uL6 (179 aa).

The protein belongs to the universal ribosomal protein uL6 family. Part of the 50S ribosomal subunit.

Functionally, this protein binds to the 23S rRNA, and is important in its secondary structure. It is located near the subunit interface in the base of the L7/L12 stalk, and near the tRNA binding site of the peptidyltransferase center. This is Large ribosomal subunit protein uL6 from Prochlorococcus marinus (strain MIT 9313).